The primary structure comprises 116 residues: Large ribosomal subunit protein bL17 (116 aa).

Belongs to the bacterial ribosomal protein bL17 family. As to quaternary structure, part of the 50S ribosomal subunit. Contacts protein L32.

The protein is Large ribosomal subunit protein bL17 of Gloeothece citriformis (strain PCC 7424) (Cyanothece sp. (strain PCC 7424)).